The chain runs to 2374 residues: MEGSNGFSSSLAGLSSSRSSLRLLTHFLSLPTLPVNIYLNARRHSGWYRSPPTLPVNIYLNEQFDNLCLAALRYPGHKLYPSVHTLFPDVSPLKIPHSVPAFAHLVQRQGLRRQGNSITNIYGNGNDVTTDVGANGMSLPIAVGDMPTASTSEAPLGSNKGGSSTSPKSTSNGNVVRGSRYSKWWEPAAARALDRALDHAVDATDAVAGAASKGIKAGAAKLSNKLSGSQTTALLALPGNIAGGAPSATVNANNTSISSQALLPSVNPYPSTPAVSLPNPDAPTQVGPAADRQWLVDTLSWSETIAPLTVFSGPKALTPGVYPPTIEPNTGVYPLPAALCVSHPESVFSTAYNAHAYFNCGFDVTVVVNASQFHGGSLIVLAMAEGLGDITPADSSTWFNFPHTIINLANSNAATLKLPYIGVTPNTSTEGLHNYWTILFAPLTPLAVPTGSPTTVKVSLFVSPIDSAFYGLRFPVPFPAPQHWKTRAVPGAGTYGSVVAGQEIPLVGYAPAAPPRDYLPGRVHNWLEYAARHSWERNLTWTSADEVGDQLVSYPIQPEALANTQTNTAFVLSLFSQWRGSLQISLIFTGPAQCYGRLLLAYTPPSANPPTTIDEANNGTYDVWDVNGDSTYTFTIPFCSQAYWKTVDIGTSSGLVSNNGYFTVFVMNPLVTPGPSPPSATVAAFLHVADDFDVRLPQCPALGFQSGADGAEVQPAPTSDLSDGNPTTDPAPRDNFDYPHHPVDPSTDLAFYFSQYRWFGLNESLTPLDATGGLFYHISLNPINFQQSSLLSVLGAFTYVYANLSLNINVSAPSQPCTFYVFYAPPGASVPSVQTLAELSFFTHTATPLNLAAPTNITVSIPYSSPQSVLCTSFGGFGLQNGGDAGNLHSNTWGTLILYVDLPQSDSVSVSAYISFRDFEAYVPRQTPGVGPVPTSTSIVRVARPTPKPRTARRQGGTLADLILSPESRCFIVAHTTAPFYSILLVNPDEEYAISMFSHGDESILQYSSRSGTRLTPTAPAFFLCAAASVDTVLPYSISQSHLWLTDLTGIPLRAVPPLTLFLSAGAALCAGAQTLIAVAQGGSTPETPPTPNRALLRRQGLGDLPDAAKGLSAALESVARVAGDANIATSSQAIATSINSLSNSIDGATSFMQNFFSGLAPRNPTSPLQHLFAKLIKWVTKIIGSLIIICNNPTPSALIGVSLMLCGDLAEDITEFFSNLGNPLAAVFYRCARALGLSPTPQSAAQAAGGRQGVRDYNDIMSALRNTDWFFEKIMTHIKNLLEWLGVLVKDDPRTKLNGQHEKILELYTDSVTASSTPPSELSADAIRSNLDLAKQLLTLSHAANSVTHIQLCTRAITNYSTALSAISLVGTPGTRPEPLVVYLYGPPGTGKSLLASLLASTLAQALSGDPNNYYSPSSPDCKFYDGYSGQPVHYIDDIGQDPDGADWADFVNIVSSAPFIVPMADVNDKGRFYTSRVVIVTSNFPGPNPRSARCVAALERRLHIRLNVTARDGVAFSAAAALQPSNPPSATRYCKFANPLTQFSMFNLAVDYKSVVLPNTPLTCFDELVDFVLSSLRDRASVNSLLSGMVRTDVTRQGGNADAPAPSAAPLPSVIPSVPSQDPFTRAVNENRPVSFLSKIWSWRAPIFAASSFLSLIAATLTIVRCLRDLRSTQGAYSGTPVPKPRKKDLPKQPVYSGPVRRQGFDPAVMKIMGNVDSFVTLSGTKPIWTMSCLWIGGRNLIAPSHAFVSDEYEITHIRVGSRTLDVSRVTRVDDGELSLLSVPDGPEHKSLIRYIRSASPKSGILASKFSDTPVFVSFWNGKSHSTPLPGVVDEKDSFTYRCSSFQGLCGSPMIATDPGGLGILGIHVAGVAGYNGFSARLTPERVQAFLSHLATPQSVLYFHPPMGPPAHVSRRSRLHPIPPAFGAFPITKEPAALSRKDPRLPEGTDLDAITLAKHDKGDIATPWPCMEEAADWYFSQLPDNLPVLSQEDAIRGLDHMDAIDLSQSPGYPWTTQGRSRRSLFDEDGNPLPELQEAIDSVWDGGSYIYQSFLKDELRPTAKARAGKTRIVEAAPIQAIVVGRRLLGSLINHLQGNPLQHGSAVGCNPDIHWTQIFHSLTSFSNVWSIDYSCFDATIPSVLLSAIASRIAARSDQPGRVLDYLSYTTTSYHVYDSLWYTMIGGNPSGCVGTSILNTIANNIAVISAMMYCNKFDPRDPPVLYCYGDDLIWGSNQDFHPRELQAFYQKFTNFVVTPADKASDFPDSSSIFDITFLKRYFVPDDIHPHLIHPVMDEQTLTNSIMWLRGGEFEEVLRSLETLAFHSGPKNYSAWCEKIKAKIRENGCDATFTPYSVLQRGWVSTCMTGPYPLTG.

Gly115 is lipidated: N-myristoyl glycine; by host. Disordered regions lie at residues 144-176 (GDMP…GNVV) and 707-739 (GADG…FDYP). Residues 157–174 (GSNKGGSSTSPKSTSNGN) show a composition bias toward low complexity. Residues 716–728 (APTSDLSDGNPTT) are compositionally biased toward polar residues. One can recognise an SF3 helicase domain in the interval 1361-1525 (YSTALSAISL…VAFSAAAALQ (165 aa)). 1387 to 1394 (GPPGTGKS) contributes to the ATP binding site. Gly1600 is lipidated: N-myristoyl glycine; by host. The helical transmembrane segment at 1649–1669 (IFAASSFLSLIAATLTIVRCL) threads the bilayer. Positions 1677–1699 (GAYSGTPVPKPRKKDLPKQPVYS) are disordered. O-(5'-phospho-RNA)-tyrosine is present on Tyr1679. In terms of domain architecture, Peptidase C3 spans 1700-1889 (GPVRRQGFDP…FSARLTPERV (190 aa)). Residues His1748, Glu1779, and Cys1852 each act as for protease 3C activity in the active site. The 118-residue stretch at 2126 to 2243 (SNVWSIDYSC…GSNQDFHPRE (118 aa)) folds into the RdRp catalytic domain. Catalysis depends on for RdRp activity residues Asp2132 and Asp2229.

Interacts with capsid protein VP1. Interacts with capsid protein VP3. In terms of assembly, interacts with capsid protein VP0. Interacts with capsid protein VP3. As to quaternary structure, interacts with capsid protein VP0. Interacts with capsid protein VP1. Homodimer. Interacts with protein 2B. Interacts with protein 2C. In terms of assembly, homodimer. Interacts with host ABCD3. Interacts with protein 2A. Interacts with host ACBD3. As to quaternary structure, homodimer. Interacts with host ABCD3. Interacts with protein 2A. Interacts with protein 3A. Interacts with protein 3C. Interacts with host ACBD3. Homodimer. Interacts with host ABCD3 (via GOLD domain) and PI4KB; these interactions allow the formation of a viral protein/ACBD3/PI4KB complex in order to synthesize PI4P at the viral RNA replication sites. Interacts with protein 2C. Interacts with protein 3C. Protein 3C: Interacts with protein 2A. Protein 3C: Interacts with protein 2C. In terms of processing, specific enzymatic cleavages by the viral protease in vivo yield a variety of precursors and mature proteins. The leader protein-VP0 junction is cleaved by 3C proteinase. The VP1/2A junction is cleaved by the protein 3CD in association with protein 2A. Post-translationally, uridylylated by the polymerase and is covalently linked to the 5'-end of genomic RNA. This uridylylated form acts as a nucleotide-peptide primer for the polymerase.

Its subcellular location is the virion. The protein localises to the host cytoplasm. It is found in the host cytoplasmic vesicle membrane. The protein resides in the host Golgi apparatus membrane. It carries out the reaction Selective cleavage of Gln-|-Gly bond in the poliovirus polyprotein. In other picornavirus reactions Glu may be substituted for Gln, and Ser or Thr for Gly.. It catalyses the reaction RNA(n) + a ribonucleoside 5'-triphosphate = RNA(n+1) + diphosphate. The enzyme catalyses ATP + H2O = ADP + phosphate + H(+). Functionally, required for viral RNA replication and viral RNA encapsidation. Does not have any proteolytic activity. Forms an icosahedral capsid of pseudo T=3 symmetry with capsid proteins VP0 and VP3. Together they form an icosahedral capsid composed of 60 copies of each VP0, VP1, and VP3. All the three latter proteins contain a beta-sheet structure called beta-barrel jelly roll. Its function is as follows. Forms an icosahedral capsid of pseudo T=3 symmetry with capsid proteins VP1 and VP3. Together they form an icosahedral capsid composed of 60 copies of each VP0, VP1, and VP3. All the three latter proteins contain a beta-sheet structure called beta-barrel jelly roll. In terms of biological role, forms an icosahedral capsid of pseudo T=3 symmetry with capsid proteins VP0 and VP1. Together they form an icosahedral capsid composed of 60 copies of each VP0, VP1, and VP3. All the three latter proteins contain a beta-sheet structure called beta-barrel jelly roll. Functionally, required for viral RNA replication. Does not have any proteolytic activity. Affects membrane integrity and causes an increase in membrane permeability. Its function is as follows. Induces and associates with structural rearrangements of intracellular membranes. Displays RNA-binding, nucleotide binding and NTPase activities. May play a role in virion morphogenesis and viral RNA encapsidation by interacting with the capsid protein VP3. In terms of biological role, serves as membrane anchor via its hydrophobic domain. Plays an essential role in viral RNA replication by recruiting PI4KB at the viral replication sites, thereby allowing the formation of rearranged membranous structures where viral replication takes place. Functionally, forms a primer, VPg-pU, which is utilized by the polymerase for the initiation of RNA chains. Cysteine protease that generates mature viral proteins from the precursor polyprotein. In addition to its proteolytic activity, it binds to viral RNA, and thus influences viral genome replication. RNA and substrate cooperatively bind to the protease. Its function is as follows. Replicates the genomic and antigenomic RNAs by recognizing replications specific signals. Performs VPg uridylylation. This chain is Genome polyprotein, found in Salivirus A (isolate Human/Nigeria/NG-J1/2007) (SV-A).